Here is a 525-residue protein sequence, read N- to C-terminus: Zwittermicin A synthase ZmaJ (525 aa).

The protein belongs to the ATP-dependent AMP-binding enzyme family.

The catalysed reaction is holo-[peptidyl-carrier protein] + L-serine + ATP = L-seryl-[peptidyl-carrier protein] + AMP + diphosphate. Its pathway is antibiotic biosynthesis. In terms of biological role, involved in the biosynthesis of the linear aminopolyol antibiotic zwittermicin A (ZmA). Specifically adenylates L-serine and loads it onto the holo form of ZmaH via a thioester linkage to the phosphopanthetheine moiety. The chain is Zwittermicin A synthase ZmaJ from Bacillus cereus.